We begin with the raw amino-acid sequence, 114 residues long: Beta-microseminoprotein (114 aa).

Positions 1-20 (MNVLLGSVVIFATFVTLCNA) are cleaved as a signal peptide. 5 disulfide bridges follow: C22–C70, C38–C62, C57–C93, C60–C69, and C84–C107.

It belongs to the beta-microseminoprotein family. As to quaternary structure, homodimer; Interacts with PI16. As to expression, strongly expressed in prostate, liver, kidney, breast and penis. Also expressed in pancreas, esophagus, stomach, deodenum, colon, trachea, lung, salivary glands and fallopian tube. PSP94 is expressed in lung and breast, whereas PSP57 is found in kidney and bladder.

It localises to the secreted. This is Beta-microseminoprotein (MSMB) from Homo sapiens (Human).